We begin with the raw amino-acid sequence, 312 residues long: tRNA dimethylallyltransferase (312 aa).

17–24 (GPTASGKS) is a binding site for ATP. 19–24 (TASGKS) is a binding site for substrate.

The protein belongs to the IPP transferase family. Monomer. Mg(2+) is required as a cofactor.

The enzyme catalyses adenosine(37) in tRNA + dimethylallyl diphosphate = N(6)-dimethylallyladenosine(37) in tRNA + diphosphate. Functionally, catalyzes the transfer of a dimethylallyl group onto the adenine at position 37 in tRNAs that read codons beginning with uridine, leading to the formation of N6-(dimethylallyl)adenosine (i(6)A). The protein is tRNA dimethylallyltransferase of Zymomonas mobilis subsp. mobilis (strain ATCC 31821 / ZM4 / CP4).